The following is a 205-amino-acid chain: Small ribosomal subunit protein uS4 (205 aa).

Residues 17 to 46 (ENIWGRPKSPVNKREYGPGQHGQRRKGKLS) form a disordered region. The 64-residue stretch at 94–157 (SRLDAVVYRA…KQLVIVLESV (64 aa)) folds into the S4 RNA-binding domain.

Belongs to the universal ribosomal protein uS4 family. In terms of assembly, part of the 30S ribosomal subunit. Contacts protein S5. The interaction surface between S4 and S5 is involved in control of translational fidelity.

In terms of biological role, one of the primary rRNA binding proteins, it binds directly to 16S rRNA where it nucleates assembly of the body of the 30S subunit. With S5 and S12 plays an important role in translational accuracy. This is Small ribosomal subunit protein uS4 from Mesorhizobium japonicum (strain LMG 29417 / CECT 9101 / MAFF 303099) (Mesorhizobium loti (strain MAFF 303099)).